The sequence spans 801 residues: Endonuclease MutS2 (801 aa).

Residue Gly336 to Thr343 participates in ATP binding. The tract at residues Ala696–Thr721 is disordered. Over residues Ala701–Lys710 the composition is skewed to basic residues. A Smr domain is found at Leu726–Ser801.

The protein belongs to the DNA mismatch repair MutS family. MutS2 subfamily. As to quaternary structure, homodimer. Binds to stalled ribosomes, contacting rRNA.

In terms of biological role, endonuclease that is involved in the suppression of homologous recombination and thus may have a key role in the control of bacterial genetic diversity. Its function is as follows. Acts as a ribosome collision sensor, splitting the ribosome into its 2 subunits. Detects stalled/collided 70S ribosomes which it binds and splits by an ATP-hydrolysis driven conformational change. Acts upstream of the ribosome quality control system (RQC), a ribosome-associated complex that mediates the extraction of incompletely synthesized nascent chains from stalled ribosomes and their subsequent degradation. Probably generates substrates for RQC. The polypeptide is Endonuclease MutS2 (Leuconostoc citreum (strain KM20)).